A 442-amino-acid polypeptide reads, in one-letter code: Choline monooxygenase, chloroplastic (442 aa).

The transit peptide at 1–58 directs the protein to the chloroplast; sequence MASSASMLINYPTTFCGVRNSSNPNNDQFSDQINIPSSLNNNINISKITSKTNKIIPK. The region spanning 123–229 is the Rieske domain; that stretch reads WQVAGYSDQI…VAIWGPFVLI (107 aa). [2Fe-2S] cluster contacts are provided by cysteine 165, histidine 167, cysteine 184, and histidine 187. Residues histidine 290 and histidine 295 each coordinate Fe cation.

It belongs to the choline monooxygenase family. The cofactor is [2Fe-2S] cluster. Fe cation serves as cofactor. Requires Mg(2+) as cofactor.

The protein resides in the plastid. Its subcellular location is the chloroplast stroma. The enzyme catalyses choline + 2 reduced [2Fe-2S]-[ferredoxin] + O2 + 2 H(+) = betaine aldehyde hydrate + 2 oxidized [2Fe-2S]-[ferredoxin] + H2O. It functions in the pathway amine and polyamine biosynthesis; betaine biosynthesis via choline pathway; betaine aldehyde from choline (monooxygenase route): step 1/1. In terms of biological role, catalyzes the first step of the osmoprotectant glycine betaine synthesis. This chain is Choline monooxygenase, chloroplastic (CMO), found in Amaranthus tricolor (Joseph's coat).